The chain runs to 1480 residues: Cystic fibrosis transmembrane conductance regulator (1480 aa).

The Cytoplasmic segment spans residues 1 to 77 (MQRSPLEKAS…KLINALRRCF (77 aa)). Residues 78–98 (FWRFMFYGIFLYLGEVTKAVQ) form a helical membrane-spanning segment. An ABC transmembrane type-1 1 domain is found at 81–365 (FMFYGIFLYL…WAVQTWYDSL (285 aa)). The Extracellular segment spans residues 99-122 (PLLLGRIIASYDPDNKEERSIAIY). The helical transmembrane segment at 123–146 (LGIGLCLLFIVRTLLLHPAIFGLH) threads the bilayer. Residues 147 to 195 (HIGMQMRIAMFSLIYKKTLKLSSRVLDKISIGQLVSLLSNNLNKFDEGL) lie on the Cytoplasmic side of the membrane. The helical transmembrane segment at 196 to 216 (ALAHFVWIAPLQVALLMGLIW) threads the bilayer. The Extracellular segment spans residues 217–222 (ELLQAS). Residues 223-243 (AFCGLGFLIVLALFQAGLGRM) form a helical membrane-spanning segment. Over 244–298 (MMKYRDQRAGKISERLVITSEMIENIQSVKAYCWEEAMEKMIENLRQTELKLTRK) the chain is Cytoplasmic. A helical membrane pass occupies residues 299–319 (AAYVRYFNSSAFFFSGFFVVF). Residues 320 to 339 (LSVLPYALIKGIVLRKIFTT) are Extracellular-facing. A helical transmembrane segment spans residues 340–358 (ISFCIVLRMAVTRQFPWAV). The Cytoplasmic portion of the chain corresponds to 359–858 (QTWYDSLGAI…YLRYITVHKS (500 aa)). ATP is bound by residues Trp-401, Ser-434, 458 to 465 (GSTGAGKT), and Gln-493. Residues 423–646 (NGDDSLFFSN…RPDFSSKLMG (224 aa)) form the ABC transporter 1 domain. Cys-524 carries S-palmitoyl cysteine lipidation. Residues Ser-549 and Ser-660 each carry the phosphoserine modification. The segment at 654-831 (SAERRNSILT…EEINEEDLKE (178 aa)) is disordered R region. Residue Ser-670 is modified to Phosphoserine; by PKA. Phosphoserine is present on Ser-686. Residue Lys-688 forms a Glycyl lysine isopeptide (Lys-Gly) (interchain with G-Cter in ubiquitin) linkage. Residues Ser-700 and Ser-712 each carry the phosphoserine modification. Thr-717 is modified (phosphothreonine). Phosphoserine occurs at positions 737, 753, 768, 790, 795, and 813. A helical membrane pass occupies residues 859 to 879 (LIFVLIWCLVIFLAEVAASLV). Residues 859-1155 (LIFVLIWCLV…AVNSSIDVDS (297 aa)) enclose the ABC transmembrane type-1 2 domain. Topologically, residues 880–918 (VLWLLGNTPLQDKGNSTHSRNNSYAVIITSTSSYYVFYI) are extracellular. N-linked (GlcNAc...) asparagine glycosylation is found at Asn-894 and Asn-900. The discontinuously helical transmembrane segment at 919–939 (YVGVADTLLAMGFFRGLPLVH) threads the bilayer. Residues 940-990 (TLITVSKILHHKMLHSVLQAPMSTLNTLKAGGILNRFSKDIAILDDLLPLT) lie on the Cytoplasmic side of the membrane. The chain crosses the membrane as a helical span at residues 991-1011 (IFDFIQLLLIVIGAIAVVAVL). At 1012-1013 (QP) the chain is on the extracellular side. A helical membrane pass occupies residues 1014–1034 (YIFVATVPVIVAFIMLRAYFL). Residues 1035–1095 (QTSQQLKQLE…TANWFLYLST (61 aa)) lie on the Cytoplasmic side of the membrane. The helical transmembrane segment at 1096–1116 (LRWFQMRIEMIFVMFFIAVTF) threads the bilayer. The Extracellular portion of the chain corresponds to 1117 to 1130 (ISILTTGEGEGRIG). A helical transmembrane segment spans residues 1131–1151 (IILTLAMNIMSTLQWAVNSSI). At 1152–1480 (DVDSLMRSVS…TEEEVQDTRL (329 aa)) the chain is on the cytoplasmic side. The region spanning 1210–1443 (MTVKDLSAKY…RSLFRQAISP (234 aa)) is the ABC transporter 2 domain. Residues Tyr-1219 and 1244 to 1251 (GRTGSGKS) contribute to the ATP site. Residues 1386–1480 (RTLKQAFADC…TEEEVQDTRL (95 aa)) form an interaction with GORASP2 region. A lipid anchor (S-palmitoyl cysteine) is attached at Cys-1395. A phosphoserine mark is found at Ser-1444 and Ser-1456. The tract at residues 1451-1480 (PHRNSSKGKSQPQIAALKEETEEEVQDTRL) is disordered. Positions 1470-1480 (ETEEEVQDTRL) are enriched in acidic residues. Positions 1478 to 1480 (TRL) match the PDZ-binding motif.

It belongs to the ABC transporter superfamily. ABCC family. CFTR transporter (TC 3.A.1.202) subfamily. Monomer; does not require oligomerization for channel activity. May form oligomers in the membrane. Interacts with SLC26A3, SLC26A6 and NHERF1. Interacts with SHANK2. Interacts with MYO6. Interacts (via C-terminus) with GOPC (via PDZ domain); this promotes CFTR internalization and thereby decreases channel activity. Interacts with SLC4A7 through NHERF1. Found in a complex with MYO5B and RAB11A. Interacts with ANO1. Interacts with SLC26A8. Interacts with AHCYL1; the interaction increases CFTR activity. Interacts with CSE1L. The core-glycosylated form interacts with GORASP2 (via PDZ GRASP-type 1 domain) in respone to ER stress. Interacts with MARCHF2; the interaction leads to CFTR ubiqtuitination and degradation. Interacts with ADGRG2. N-glycosylated. Post-translationally, phosphorylated; cAMP treatment promotes phosphorylation and activates the channel. Dephosphorylation decreases the ATPase activity (in vitro). Phosphorylation at PKA sites activates the channel. Phosphorylation at PKC sites enhances the response to phosphorylation by PKA. Phosphorylated by AMPK; this inhibits channel activity. In terms of processing, ubiquitinated, leading to its degradation in the lysosome. Deubiquitination by USP10 in early endosomes enhances its endocytic recycling to the cell membrane. Ubiquitinated by RNF185 during ER stress. Ubiquitinated by MARCHF2.

It is found in the apical cell membrane. The protein localises to the early endosome membrane. The protein resides in the cell membrane. Its subcellular location is the recycling endosome membrane. It localises to the endoplasmic reticulum membrane. It is found in the nucleus. The enzyme catalyses ATP + H2O + closed Cl(-) channel = ADP + phosphate + open Cl(-) channel.. It catalyses the reaction chloride(in) = chloride(out). It carries out the reaction hydrogencarbonate(in) = hydrogencarbonate(out). The catalysed reaction is ATP + H2O = ADP + phosphate + H(+). Its function is as follows. Epithelial ion channel that plays an important role in the regulation of epithelial ion and water transport and fluid homeostasis. Mediates the transport of chloride ions across the cell membrane. Possesses an intrinsic ATPase activity and utilizes ATP to gate its channel; the passive flow of anions through the channel is gated by cycles of ATP binding and hydrolysis by the ATP-binding domains. The ion channel is also permeable to HCO(3)(-); selectivity depends on the extracellular chloride concentration. Exerts its function also by modulating the activity of other ion channels and transporters. Contributes to the regulation of the pH and the ion content of the epithelial fluid layer. Modulates the activity of the epithelial sodium channel (ENaC) complex, in part by regulating the cell surface expression of the ENaC complex. May regulate bicarbonate secretion and salvage in epithelial cells by regulating the transporter SLC4A7. Can inhibit the chloride channel activity of ANO1. Plays a role in the chloride and bicarbonate homeostasis during sperm epididymal maturation and capacitation. This is Cystic fibrosis transmembrane conductance regulator from Nomascus leucogenys (Northern white-cheeked gibbon).